Consider the following 41-residue polypeptide: Large ribosomal subunit protein bL36 (41 aa).

Belongs to the bacterial ribosomal protein bL36 family.

In Jannaschia sp. (strain CCS1), this protein is Large ribosomal subunit protein bL36.